The sequence spans 316 residues: Transaldolase 2 (316 aa).

Lys131 (schiff-base intermediate with substrate) is an active-site residue.

The protein belongs to the transaldolase family. Type 1 subfamily. In terms of assembly, homodimer.

The protein localises to the cytoplasm. The enzyme catalyses D-sedoheptulose 7-phosphate + D-glyceraldehyde 3-phosphate = D-erythrose 4-phosphate + beta-D-fructose 6-phosphate. It participates in carbohydrate degradation; pentose phosphate pathway; D-glyceraldehyde 3-phosphate and beta-D-fructose 6-phosphate from D-ribose 5-phosphate and D-xylulose 5-phosphate (non-oxidative stage): step 2/3. Transaldolase is important for the balance of metabolites in the pentose-phosphate pathway. This is Transaldolase 2 from Salmonella paratyphi A (strain ATCC 9150 / SARB42).